Here is a 1033-residue protein sequence, read N- to C-terminus: SIT4-associating protein SAP190 (1033 aa).

Disordered regions lie at residues 32-82 (DQDD…TTES), 147-213 (PEII…QVET), and 768-1033 (FGND…KEAF). Over residues 158 to 170 (ILIERDRKDKKED) the composition is skewed to basic and acidic residues. The segment covering 171 to 182 (AEEGGDSEETTN) has biased composition (acidic residues). The segment covering 183-195 (DSDHDSGDERSVD) has biased composition (basic and acidic residues). At S774 the chain carries Phosphoserine. Acidic residues-rich tracts occupy residues 784–793 (SEDIIGDTEG) and 825–838 (ENEE…EYSD). A phosphoserine mark is found at S857, S862, and S892. The segment covering 858–879 (DDGKSKSAESEFTDKISEHRDG) has biased composition (basic and acidic residues). The segment covering 909 to 924 (SRSQPSDPKLQDQNIF) has biased composition (polar residues). Over residues 932-944 (GVGDDDDYMDPND) the composition is skewed to acidic residues. Position 990 is a phosphothreonine (T990). S991 bears the Phosphoserine mark. A compositionally biased stretch (acidic residues) spans 1000-1018 (ISSDEEDSEDEDEENDMGN).

It belongs to the SAPS family. Associates with the SIT4 protein phosphatase catalytic subunit in a cell-cycle-dependent manner. Hyperphosphorylated in the absence of SIT4.

The protein localises to the cytoplasm. Positive regulator of protein phosphatase SIT4. Involved in the general amino acid control (GAAC) response regulated by TOR. Involved in the dephosphorylation of the elongator complex subunit IKI3. The sequence is that of SIT4-associating protein SAP190 (SAP190) from Saccharomyces cerevisiae (strain ATCC 204508 / S288c) (Baker's yeast).